The following is a 593-amino-acid chain: MLO-like protein 8 (593 aa).

Topologically, residues 1–46 (MGIIDGSLLRRLICLCLWCLLGGGVTVVTAEDEKKVVHKQLNQTPT) are extracellular. The helical transmembrane segment at 47–67 (WAVAAVCTFFIVVSVLLEKLL) threads the bilayer. The Cytoplasmic segment spans residues 68–92 (HKVGKVLWDRHKTALLDALEKIKAE). A helical transmembrane segment spans residues 93-113 (LMVLGFISLLLTFGQTYILDI). The Extracellular segment spans residues 114 to 181 (CIPSHVARTM…ISAEALHQLH (68 aa)). A helical membrane pass occupies residues 182-202 (ILIFFLAIFHVLYSFLTMMLG). Residues 203 to 304 (RLKIRGWKHW…IKRSLEDDFK (102 aa)) are Cytoplasmic-facing. A helical membrane pass occupies residues 305–325 (VVVGVSPVLWGSFVLFLLLNI). Residue D326 is a topological domain, extracellular. A helical transmembrane segment spans residues 327–347 (GFKMMFIGTAIPVIIILAVGT). Residues 348-393 (KLQAIMTRMALGITDRHAVVQGMPLVQGNDEYFWFGRPHLILHLMH) are Cytoplasmic-facing. The chain crosses the membrane as a helical span at residues 394-414 (FALFQNAFQITYFFWIWYSFG). At 415–430 (SDSCYHPNFKIALVKV) the chain is on the extracellular side. A helical transmembrane segment spans residues 431 to 451 (AIALGVLCLCSYITLPLYALV). The Cytoplasmic portion of the chain corresponds to 452–593 (TQMGSRMKKS…APSNESSQDR (142 aa)). Residues 465–486 (EQTSKALKKWRMAVKKKKGVKA) are calmodulin-binding. The disordered stretch occupies residues 481–593 (KKGVKATTKR…APSNESSQDR (113 aa)). Residues 489–512 (KRLGGDGSASPTASTVRSTSSVRS) show a composition bias toward low complexity. Positions 528-539 (LDPETSDLDTDN) are enriched in acidic residues. Over residues 567–579 (TSRDTETDSKEFS) the composition is skewed to basic and acidic residues.

The protein belongs to the MLO family.

The protein localises to the membrane. Functionally, may be involved in modulation of pathogen defense and leaf cell death. Activity seems to be regulated by Ca(2+)-dependent calmodulin binding and seems not to require heterotrimeric G proteins. This chain is MLO-like protein 8 (MLO8), found in Arabidopsis thaliana (Mouse-ear cress).